Reading from the N-terminus, the 186-residue chain is Peptide deformylase (186 aa).

The Fe cation site is built by Cys99 and His141. Glu142 is a catalytic residue. Fe cation is bound at residue His145.

The protein belongs to the polypeptide deformylase family. Fe(2+) is required as a cofactor.

It carries out the reaction N-terminal N-formyl-L-methionyl-[peptide] + H2O = N-terminal L-methionyl-[peptide] + formate. Removes the formyl group from the N-terminal Met of newly synthesized proteins. Requires at least a dipeptide for an efficient rate of reaction. N-terminal L-methionine is a prerequisite for activity but the enzyme has broad specificity at other positions. The sequence is that of Peptide deformylase from Chlamydia pneumoniae (Chlamydophila pneumoniae).